Here is a 74-residue protein sequence, read N- to C-terminus: UPF0154 protein LSL_0542 (74 aa).

The helical transmembrane segment at 5-25 (IWVLIVIIAAVLGFVGGFFAA) threads the bilayer.

It belongs to the UPF0154 family.

Its subcellular location is the cell membrane. The polypeptide is UPF0154 protein LSL_0542 (Ligilactobacillus salivarius (strain UCC118) (Lactobacillus salivarius)).